Here is a 264-residue protein sequence, read N- to C-terminus: Thymidylate synthase (264 aa).

Residues Arg-21 and 126–127 (RR) each bind dUMP. Residue Cys-146 is the Nucleophile of the active site. Residues 166–169 (RSAD), Asn-177, and 207–209 (HLY) contribute to the dUMP site. Position 169 (Asp-169) interacts with (6R)-5,10-methylene-5,6,7,8-tetrahydrofolate. A (6R)-5,10-methylene-5,6,7,8-tetrahydrofolate-binding site is contributed by Ala-263.

It belongs to the thymidylate synthase family. Bacterial-type ThyA subfamily. As to quaternary structure, homodimer.

The protein resides in the cytoplasm. The catalysed reaction is dUMP + (6R)-5,10-methylene-5,6,7,8-tetrahydrofolate = 7,8-dihydrofolate + dTMP. It functions in the pathway pyrimidine metabolism; dTTP biosynthesis. Its function is as follows. Catalyzes the reductive methylation of 2'-deoxyuridine-5'-monophosphate (dUMP) to 2'-deoxythymidine-5'-monophosphate (dTMP) while utilizing 5,10-methylenetetrahydrofolate (mTHF) as the methyl donor and reductant in the reaction, yielding dihydrofolate (DHF) as a by-product. This enzymatic reaction provides an intracellular de novo source of dTMP, an essential precursor for DNA biosynthesis. The chain is Thymidylate synthase from Rhodopseudomonas palustris (strain BisB5).